Consider the following 368-residue polypeptide: Protein L-Myc (368 aa).

Disordered regions lie at residues 39–79, 112–179, and 218–295; these read PPTS…RGHS, RLAP…EKRR, and FPPE…FLER. A compositionally biased stretch (polar residues) spans 135-147; that stretch reads LEASNPAPATQCQ. Residues 247–258 show a composition bias toward acidic residues; that stretch reads EEEEEEEEEEEI. Basic and acidic residues predominate over residues 283–294; it reads DVTKRKNHNFLE. In terms of domain architecture, bHLH spans 285–337; sequence TKRKNHNFLERKRRNDLRSRFLALRDQVPTLASCSKAPKVVILSKALEYLQAL. The tract at residues 337–365 is leucine-zipper; that stretch reads LVGAEKKMATEKRQLRCRQQQLQKRIAYL.

Efficient DNA binding requires dimerization with another bHLH protein. Binds DNA as a heterodimer with MAX.

The protein resides in the nucleus. The polypeptide is Protein L-Myc (Mycl) (Mus musculus (Mouse)).